A 434-amino-acid chain; its full sequence is Trigger factor (434 aa).

In terms of domain architecture, PPIase FKBP-type spans glutamate 161 to proline 246.

Belongs to the FKBP-type PPIase family. Tig subfamily.

Its subcellular location is the cytoplasm. The enzyme catalyses [protein]-peptidylproline (omega=180) = [protein]-peptidylproline (omega=0). Its function is as follows. Involved in protein export. Acts as a chaperone by maintaining the newly synthesized protein in an open conformation. Functions as a peptidyl-prolyl cis-trans isomerase. This Pectobacterium atrosepticum (strain SCRI 1043 / ATCC BAA-672) (Erwinia carotovora subsp. atroseptica) protein is Trigger factor.